The following is a 459-amino-acid chain: NADH-ubiquinone oxidoreductase chain 4 (459 aa).

13 helical membrane passes run Met22 to Phe42, Pro60 to Ser80, Leu94 to Ala112, Thr113 to Ile133, Ala145 to Ile165, Trp196 to Leu216, Pro224 to Met244, Met257 to Leu277, Ser284 to Ile303, Ser308 to Ala330, Leu351 to Pro371, Thr391 to Phe411, and Ile435 to Thr455.

It belongs to the complex I subunit 4 family. Core subunit of respiratory chain NADH dehydrogenase (Complex I) which is composed of 45 different subunits.

Its subcellular location is the mitochondrion inner membrane. The enzyme catalyses a ubiquinone + NADH + 5 H(+)(in) = a ubiquinol + NAD(+) + 4 H(+)(out). Functionally, core subunit of the mitochondrial membrane respiratory chain NADH dehydrogenase (Complex I) which catalyzes electron transfer from NADH through the respiratory chain, using ubiquinone as an electron acceptor. Essential for the catalytic activity and assembly of complex I. This is NADH-ubiquinone oxidoreductase chain 4 (MT-ND4) from Gorilla gorilla gorilla (Western lowland gorilla).